We begin with the raw amino-acid sequence, 230 residues long: Large ribosomal subunit protein uL1 (230 aa).

This sequence belongs to the universal ribosomal protein uL1 family. Part of the 50S ribosomal subunit.

In terms of biological role, binds directly to 23S rRNA. The L1 stalk is quite mobile in the ribosome, and is involved in E site tRNA release. Functionally, protein L1 is also a translational repressor protein, it controls the translation of the L11 operon by binding to its mRNA. The sequence is that of Large ribosomal subunit protein uL1 from Bifidobacterium longum subsp. infantis (strain ATCC 15697 / DSM 20088 / JCM 1222 / NCTC 11817 / S12).